Consider the following 488-residue polypeptide: MDLNQISETLSAVAEEEPLTMFLLDKLYAIREKIKQVPFSIVRLCHVYCMLIKYNASNNNCILGRKLIEEMQQFLCGARVDGSEDVSMDMSELCKLYDYCPLLCSALCRAPCVFVNKLFKIVERETRGQSENPLWHALRRYTVTATKLYDIYTTRNFLEHKGQQFFGEAVIYGAKHERVIRHLVAIFYVKREVKETLGLLLDPSSGVFGASLDACFGISFNEDGFLMVKEKALIFEIKFRYKYLRDKEDHFVSELLKNPTEKSFSDFILSHPVPAIEFRERGKIPSSREYLMTYDFQYRPQRKLRTCPTPAILTPHIKQLLCLNETQTSTVIVFDCKSHLSEQKLSVFQKAVFTVNVFVNPKHRYFFQSLLQQYVMTQFYINDHSNPEYIESTEVPSVHIVTALFRRRTEEERSLHLVIDETEYIEEEIPLALIVTPVAPNPEFTCRVITDICNLWENNICKQTSLQVWAQSAVNQYLAACVRKPKTP.

This sequence belongs to the herpesviridae alkaline nuclease family. In terms of assembly, interacts with major DNA-binding protein; this interaction increases the nuclease processivity of the alkaline exonuclease.

The protein resides in the host nucleus. Its subcellular location is the host cytoplasm. Its function is as follows. Plays a role in processing non linear or branched viral DNA intermediates in order to promote the production of mature packaged unit-length linear progeny viral DNA molecules. Exhibits endonuclease and exonuclease activities and accepts both double-stranded and single-stranded DNA as substrate. Exonuclease digestion of DNA is in the 5'-&gt; 3' direction and the products are 5'-monophosphate nucleosides. Additionally, forms a recombinase with the major DNA-binding protein, which displays strand exchange activity. This Homo sapiens (Human) protein is Alkaline nuclease (U70).